A 237-amino-acid chain; its full sequence is Ribonuclease PH (237 aa).

Residues Arg-86 and 124–126 contribute to the phosphate site; that span reads GTR.

The protein belongs to the RNase PH family. Homohexameric ring arranged as a trimer of dimers.

It carries out the reaction tRNA(n+1) + phosphate = tRNA(n) + a ribonucleoside 5'-diphosphate. Functionally, phosphorolytic 3'-5' exoribonuclease that plays an important role in tRNA 3'-end maturation. Removes nucleotide residues following the 3'-CCA terminus of tRNAs; can also add nucleotides to the ends of RNA molecules by using nucleoside diphosphates as substrates, but this may not be physiologically important. Probably plays a role in initiation of 16S rRNA degradation (leading to ribosome degradation) during starvation. This is Ribonuclease PH from Methylocella silvestris (strain DSM 15510 / CIP 108128 / LMG 27833 / NCIMB 13906 / BL2).